A 264-amino-acid chain; its full sequence is Thymidylate synthase (264 aa).

R21 is a binding site for dUMP. H51 is a binding site for (6R)-5,10-methylene-5,6,7,8-tetrahydrofolate. Residue 126–127 coordinates dUMP; that stretch reads RR. The active-site Nucleophile is C146. DUMP contacts are provided by residues 166 to 169, N177, and 207 to 209; these read RSAD and HLY. Residue D169 coordinates (6R)-5,10-methylene-5,6,7,8-tetrahydrofolate. A263 lines the (6R)-5,10-methylene-5,6,7,8-tetrahydrofolate pocket.

The protein belongs to the thymidylate synthase family. Bacterial-type ThyA subfamily. Homodimer.

The protein resides in the cytoplasm. It carries out the reaction dUMP + (6R)-5,10-methylene-5,6,7,8-tetrahydrofolate = 7,8-dihydrofolate + dTMP. The protein operates within pyrimidine metabolism; dTTP biosynthesis. In terms of biological role, catalyzes the reductive methylation of 2'-deoxyuridine-5'-monophosphate (dUMP) to 2'-deoxythymidine-5'-monophosphate (dTMP) while utilizing 5,10-methylenetetrahydrofolate (mTHF) as the methyl donor and reductant in the reaction, yielding dihydrofolate (DHF) as a by-product. This enzymatic reaction provides an intracellular de novo source of dTMP, an essential precursor for DNA biosynthesis. The polypeptide is Thymidylate synthase (Chromobacterium violaceum (strain ATCC 12472 / DSM 30191 / JCM 1249 / CCUG 213 / NBRC 12614 / NCIMB 9131 / NCTC 9757 / MK)).